Here is a 131-residue protein sequence, read N- to C-terminus: Small ribosomal subunit protein uS8 (131 aa).

This sequence belongs to the universal ribosomal protein uS8 family. In terms of assembly, part of the 30S ribosomal subunit. Contacts proteins S5 and S12.

One of the primary rRNA binding proteins, it binds directly to 16S rRNA central domain where it helps coordinate assembly of the platform of the 30S subunit. The chain is Small ribosomal subunit protein uS8 from Sulfurimonas denitrificans (strain ATCC 33889 / DSM 1251) (Thiomicrospira denitrificans (strain ATCC 33889 / DSM 1251)).